The following is a 126-amino-acid chain: Fluoride-specific ion channel FluC (126 aa).

Transmembrane regions (helical) follow at residues Ile-5–Val-25, Val-37–Ala-57, Leu-65–Leu-85, and Leu-101–Ala-121. Residues Gly-75 and Thr-78 each contribute to the Na(+) site.

It belongs to the fluoride channel Fluc/FEX (TC 1.A.43) family.

It localises to the cell inner membrane. The catalysed reaction is fluoride(in) = fluoride(out). With respect to regulation, na(+) is not transported, but it plays an essential structural role and its presence is essential for fluoride channel function. Functionally, fluoride-specific ion channel. Important for reducing fluoride concentration in the cell, thus reducing its toxicity. The sequence is that of Fluoride-specific ion channel FluC from Roseobacter denitrificans (strain ATCC 33942 / OCh 114) (Erythrobacter sp. (strain OCh 114)).